The following is a 363-amino-acid chain: Chorismate synthase (363 aa).

NADP(+) contacts are provided by arginine 48 and arginine 54. Residues 125–127, 237–238, glycine 277, 292–296, and arginine 318 contribute to the FMN site; these read RSS, NA, and KPTSS.

This sequence belongs to the chorismate synthase family. Homotetramer. FMNH2 serves as cofactor.

It carries out the reaction 5-O-(1-carboxyvinyl)-3-phosphoshikimate = chorismate + phosphate. The protein operates within metabolic intermediate biosynthesis; chorismate biosynthesis; chorismate from D-erythrose 4-phosphate and phosphoenolpyruvate: step 7/7. Catalyzes the anti-1,4-elimination of the C-3 phosphate and the C-6 proR hydrogen from 5-enolpyruvylshikimate-3-phosphate (EPSP) to yield chorismate, which is the branch point compound that serves as the starting substrate for the three terminal pathways of aromatic amino acid biosynthesis. This reaction introduces a second double bond into the aromatic ring system. In Pseudomonas entomophila (strain L48), this protein is Chorismate synthase.